The primary structure comprises 718 residues: MKGAIQFLGALAAVQAVSATYIDWTQPFNSYDCGGKQCGGRPKFEPPAYSNERCTPQQNTGYDFSDAPDGDLPKYDDFDFSGYKCQKSKLQRRSGRGSGSKCASSYVEPETYSNEIKCGKKFSVDEFDISLEYESVIEFHYGMPDGSSCKHVSKCGTGITPVKNTQCGGAKSVKCKIHKSSQNKKKCKFNIHHIKFRCDKPSTTSAPVPATTSEPAPCTEYSCTATDTTTEPAPTEPAPTEPAPCTEYSCTATDTTTEPAPTEPAPCTEYSCTATDTTTEPAPCTEYSCTATDTTTEPAPTEPAPTEPAPCTEYSCTATDTTTEPAPTEPAPTEPAPCTEYSCTATDTTTEPAPTEPAPCTEYSCTATETTSEAVPTTTDEAPCTDYSCTATEAVPTTTDEAPCTEYSCTGVPTSEAVPTTSDDVPTTTDVYIPPTDVYVPPTDIYVPPANTSIPYETPSPSETETLPPSGTDVYTTLPSVPVETGCPPVLPQCMETWTKITQCVNSGDVKCLCPNPEYIKSVAECVEAWGVDDDEVAKALEYMQGLCAEHIPENPAIVTCVPTYVTLPPVTTGASTVTVSTTVVVPVTTASPEETNKPGYVPVFTTETVIRTVTVCPVKLVTTEPSKPVLVPGTITAPPYVPPTAPATIPATVPAEATTPPVEYAPSTLMTAYPTVPVPVNNTTPNPPIATGAASSFKAFSTVMLAGVIGLTALIMA.

Residues 1–19 (MKGAIQFLGALAAVQAVSA) form the signal peptide. Tandem repeats lie at residues 217-243 (PCTEYSCTATDTTTEPAPTEPAPTEPA), 244-265 (PCTEYSCTATDTTTEPAPTEPA), 266-282 (PCTEYSCTATDTTTEPA), 283-309 (PCTEYSCTATDTTTEPAPTEPAPTEPA), 310-336 (PCTEYSCTATDTTTEPAPTEPAPTEPA), 337-358 (PCTEYSCTATDTTTEPAPTEPA), 359-382 (PCTEYSCTATETTSEAVPTTTDEA), 383-402 (PCTDYSCTATEAVPTTTDEA), and 403-420 (PCTEYSCTGVPTSEAVPT). The tract at residues 452–472 (TSIPYETPSPSETETLPPSGT) is disordered. In terms of domain architecture, CFEM spans 462–575 (SETETLPPSG…VTLPPVTTGA (114 aa)). 3 disulfide bridges follow: cysteine 494–cysteine 526, cysteine 504–cysteine 512, and cysteine 514–cysteine 548. Aspartate 509 contacts heme. Glycine 693 is lipidated: GPI-anchor amidated glycine. A propeptide spans 694–718 (AASSFKAFSTVMLAGVIGLTALIMA) (removed in mature form).

Belongs to the RBT5 family. The GPI-anchor is attached to the protein in the endoplasmic reticulum and serves to target the protein to the cell surface. There, the glucosamine-inositol phospholipid moiety is cleaved off and the GPI-modified mannoprotein is covalently attached via its lipidless GPI glycan remnant to the 1,6-beta-glucan of the outer cell wall layer.

The protein resides in the secreted. It is found in the cell wall. The protein localises to the cell membrane. Cell surface adhesion protein that plays a key role in switching between the saprophytic lifestyle and the predacious lifestyle (nematode trapping). Likely functions to prevent energy-consuming trap formation in the absence of nematodes, and keeps the fungus in the saprophytic life style. May influence the induction signal of trap formation by limiting the porosity of the cell wall and thus affecting its permeability of nitrogen source. In Arthrobotrys oligospora (strain ATCC 24927 / CBS 115.81 / DSM 1491) (Nematode-trapping fungus), this protein is Adhesin-like cell surface protein MAD1.